Reading from the N-terminus, the 414-residue chain is CinA-like protein (414 aa).

It belongs to the CinA family.

The sequence is that of CinA-like protein from Akkermansia muciniphila (strain ATCC BAA-835 / DSM 22959 / JCM 33894 / BCRC 81048 / CCUG 64013 / CIP 107961 / Muc).